Reading from the N-terminus, the 233-residue chain is Hydroxyacylglutathione hydrolase (233 aa).

Residues His-52, His-54, Asp-56, His-57, His-108, Asp-125, and His-163 each contribute to the Zn(2+) site.

Belongs to the metallo-beta-lactamase superfamily. Glyoxalase II family. In terms of assembly, monomer. It depends on Zn(2+) as a cofactor.

It carries out the reaction an S-(2-hydroxyacyl)glutathione + H2O = a 2-hydroxy carboxylate + glutathione + H(+). Its pathway is secondary metabolite metabolism; methylglyoxal degradation; (R)-lactate from methylglyoxal: step 2/2. Thiolesterase that catalyzes the hydrolysis of S-D-lactoyl-glutathione to form glutathione and D-lactic acid. The protein is Hydroxyacylglutathione hydrolase of Pasteurella multocida (strain Pm70).